The chain runs to 202 residues: Large ribosomal subunit protein bL9 (202 aa).

The tract at residues 168–202 (DEAGFTEDYDPNAEPGEIPTELQDEAPAAEATDEA) is disordered. A compositionally biased stretch (low complexity) spans 192 to 202 (EAPAAEATDEA).

Belongs to the bacterial ribosomal protein bL9 family.

Its function is as follows. Binds to the 23S rRNA. In Rhizorhabdus wittichii (strain DSM 6014 / CCUG 31198 / JCM 15750 / NBRC 105917 / EY 4224 / RW1) (Sphingomonas wittichii), this protein is Large ribosomal subunit protein bL9.